The primary structure comprises 120 residues: Large ribosomal subunit protein uL22 (120 aa).

Positions 1–20 (MFVNRRYTARGKNLPSSPKK) are disordered.

It belongs to the universal ribosomal protein uL22 family. Part of the 50S ribosomal subunit.

Its function is as follows. This protein binds specifically to 23S rRNA; its binding is stimulated by other ribosomal proteins, e.g. L4, L17, and L20. It is important during the early stages of 50S assembly. It makes multiple contacts with different domains of the 23S rRNA in the assembled 50S subunit and ribosome. In terms of biological role, the globular domain of the protein is located near the polypeptide exit tunnel on the outside of the subunit, while an extended beta-hairpin is found that lines the wall of the exit tunnel in the center of the 70S ribosome. The chain is Large ribosomal subunit protein uL22 from Borrelia hermsii (strain HS1 / DAH).